We begin with the raw amino-acid sequence, 331 residues long: Cytoplasmic envelopment protein 1 (331 aa).

This sequence belongs to the herpesviridae cytoplasmic envelopment protein 1 family. As to quaternary structure, interacts with protein ORF7; this interaction localizes protein ORF53 to the host trans-Golgi network (TGN).

The protein localises to the virion. It is found in the virion tegument. Its subcellular location is the host cytoplasm. The protein resides in the host Golgi apparatus. Its function is as follows. Plays a critical role in cytoplasmic virus egress. Participates in the final step of tegumentation and envelope acquisition within the host cytoplasm. The protein is Cytoplasmic envelopment protein 1 (ORF53) of Varicella-zoster virus (strain Dumas) (HHV-3).